The primary structure comprises 262 residues: Triosephosphate isomerase (262 aa).

13–15 (NWK) serves as a coordination point for substrate. The Electrophile role is filled by His-103. The Proton acceptor role is filled by Glu-175. Substrate is bound by residues Gly-181, Ser-221, and 242-243 (GG).

Belongs to the triosephosphate isomerase family. In terms of assembly, homodimer.

The protein localises to the cytoplasm. The enzyme catalyses D-glyceraldehyde 3-phosphate = dihydroxyacetone phosphate. It participates in carbohydrate biosynthesis; gluconeogenesis. The protein operates within carbohydrate degradation; glycolysis; D-glyceraldehyde 3-phosphate from glycerone phosphate: step 1/1. In terms of biological role, involved in the gluconeogenesis. Catalyzes stereospecifically the conversion of dihydroxyacetone phosphate (DHAP) to D-glyceraldehyde-3-phosphate (G3P). The chain is Triosephosphate isomerase from Corynebacterium efficiens (strain DSM 44549 / YS-314 / AJ 12310 / JCM 11189 / NBRC 100395).